The following is a 552-amino-acid chain: Putative transport protein PBPRA2144 (552 aa).

5 helical membrane-spanning segments follow: residues 4-24 (IALS…IGNW), 26-46 (ICGV…VGHF), 65-85 (FGLI…FFAS), 95-115 (AFAA…YKIF), and 158-178 (MGYA…MWIL). 2 RCK C-terminal domains span residues 188–276 (KEAE…VIGE) and 279–361 (DASL…IVGN). 6 consecutive transmembrane segments (helical) span residues 371-391 (MLPV…PFYL), 394-414 (FPAA…LILA), 439-459 (IVLF…DTLV), 464-484 (LSWM…VGFL), 493-513 (YLTI…LAFA), and 532-552 (PLVM…LWAV).

Belongs to the AAE transporter (TC 2.A.81) family. YidE subfamily.

The protein resides in the cell membrane. The sequence is that of Putative transport protein PBPRA2144 from Photobacterium profundum (strain SS9).